Here is a 318-residue protein sequence, read N- to C-terminus: uncharacterized protein (318 aa).

To A.aeolicus AA07 and AA11.

This is an uncharacterized protein from Aquifex aeolicus (strain VF5).